The sequence spans 871 residues: Alanine--tRNA ligase (871 aa).

Zn(2+) contacts are provided by H559, H563, C661, and H665.

The protein belongs to the class-II aminoacyl-tRNA synthetase family. It depends on Zn(2+) as a cofactor.

It localises to the cytoplasm. It carries out the reaction tRNA(Ala) + L-alanine + ATP = L-alanyl-tRNA(Ala) + AMP + diphosphate. In terms of biological role, catalyzes the attachment of alanine to tRNA(Ala) in a two-step reaction: alanine is first activated by ATP to form Ala-AMP and then transferred to the acceptor end of tRNA(Ala). Also edits incorrectly charged Ser-tRNA(Ala) and Gly-tRNA(Ala) via its editing domain. The protein is Alanine--tRNA ligase of Aquifex pyrophilus.